We begin with the raw amino-acid sequence, 571 residues long: Proline--tRNA ligase (571 aa).

It belongs to the class-II aminoacyl-tRNA synthetase family. ProS type 1 subfamily. Homodimer.

The protein resides in the cytoplasm. It carries out the reaction tRNA(Pro) + L-proline + ATP = L-prolyl-tRNA(Pro) + AMP + diphosphate. Functionally, catalyzes the attachment of proline to tRNA(Pro) in a two-step reaction: proline is first activated by ATP to form Pro-AMP and then transferred to the acceptor end of tRNA(Pro). As ProRS can inadvertently accommodate and process non-cognate amino acids such as alanine and cysteine, to avoid such errors it has two additional distinct editing activities against alanine. One activity is designated as 'pretransfer' editing and involves the tRNA(Pro)-independent hydrolysis of activated Ala-AMP. The other activity is designated 'posttransfer' editing and involves deacylation of mischarged Ala-tRNA(Pro). The misacylated Cys-tRNA(Pro) is not edited by ProRS. The chain is Proline--tRNA ligase from Glaesserella parasuis serovar 5 (strain SH0165) (Haemophilus parasuis).